Here is a 359-residue protein sequence, read N- to C-terminus: UPF0283 membrane protein Atu1356 (359 aa).

Positions 1–39 (MKAPTQNDPQTRRPAAFTLETEEAARPSATQKRAPRSFD) are disordered. The next 2 helical transmembrane spans lie at 75 to 95 (FGKL…GLWA) and 108 to 128 (WLGY…LALV).

This sequence belongs to the UPF0283 family.

It localises to the cell inner membrane. The chain is UPF0283 membrane protein Atu1356 from Agrobacterium fabrum (strain C58 / ATCC 33970) (Agrobacterium tumefaciens (strain C58)).